The primary structure comprises 636 residues: Biosynthetic arginine decarboxylase (636 aa).

Lys-110 carries the N6-(pyridoxal phosphate)lysine modification. A substrate-binding site is contributed by 290–300 (IDVGGGLGVDY).

The protein belongs to the Orn/Lys/Arg decarboxylase class-II family. SpeA subfamily. It depends on Mg(2+) as a cofactor. Pyridoxal 5'-phosphate serves as cofactor.

It carries out the reaction L-arginine + H(+) = agmatine + CO2. In terms of biological role, catalyzes the biosynthesis of agmatine from arginine. The sequence is that of Biosynthetic arginine decarboxylase from Pseudomonas aeruginosa (strain ATCC 15692 / DSM 22644 / CIP 104116 / JCM 14847 / LMG 12228 / 1C / PRS 101 / PAO1).